The following is a 90-amino-acid chain: Bombyxin G-1 (90 aa).

The first 19 residues, 1-19, serve as a signal peptide directing secretion; sequence MKLIIFVVFCITIYGSTSG. 3 disulfide bridges follow: Cys28–Cys77, Cys40–Cys90, and Cys76–Cys81. Positions 49-67 are cleaved as a propeptide — c peptide like; that stretch reads NTQYEGYHWPLLAYSEERI.

Belongs to the insulin family. As to quaternary structure, heterodimer of a B chain and an A chain linked by two disulfide bonds.

The protein resides in the secreted. The polypeptide is Bombyxin G-1 (BBXG1) (Bombyx mori (Silk moth)).